A 308-amino-acid chain; its full sequence is Homogentisate phytyltransferase (308 aa).

Helical transmembrane passes span 13–33 (PHTI…TILG), 44–64 (LDLV…IVGL), 104–124 (LAIA…SLII), 142–162 (AALC…FLFF), 173–193 (ITPI…IAIF), 219–241 (VFRG…GLWA), 245–263 (LNTA…LLWW), and 279–299 (FYQF…LALW).

The protein belongs to the UbiA prenyltransferase family.

It localises to the membrane. The enzyme catalyses phytyl diphosphate + homogentisate + H(+) = 2-methyl-6-phytyl-1,4-benzene-1,4-diol + CO2 + diphosphate. Its pathway is cofactor biosynthesis; tocopherol biosynthesis. Its function is as follows. Involved in the synthesis of tocopherol (vitamin E). Catalyzes the condensation of homogentisate and phytyl diphosphate to form dimethylphytylhydrquinone. This Synechocystis sp. (strain ATCC 27184 / PCC 6803 / Kazusa) protein is Homogentisate phytyltransferase.